Here is a 331-residue protein sequence, read N- to C-terminus: Ketol-acid reductoisomerase (NADP(+)) (331 aa).

Residues 2–182 enclose the KARI N-terminal Rossmann domain; it reads AQLFYDSDAD…GGTRAGILET (181 aa). Residues 25 to 28, Ser-51, Ser-53, and 83 to 86 each bind NADP(+); these read YGSQ and DEFQ. Residue His-108 is part of the active site. Gly-134 contributes to the NADP(+) binding site. Residues 183–328 enclose the KARI C-terminal knotted domain; sequence NFKEETETDL…KGLRSMFSWL (146 aa). Positions 191, 195, 227, and 231 each coordinate Mg(2+). Ser-252 lines the substrate pocket.

The protein belongs to the ketol-acid reductoisomerase family. It depends on Mg(2+) as a cofactor.

The catalysed reaction is (2R)-2,3-dihydroxy-3-methylbutanoate + NADP(+) = (2S)-2-acetolactate + NADPH + H(+). It carries out the reaction (2R,3R)-2,3-dihydroxy-3-methylpentanoate + NADP(+) = (S)-2-ethyl-2-hydroxy-3-oxobutanoate + NADPH + H(+). It participates in amino-acid biosynthesis; L-isoleucine biosynthesis; L-isoleucine from 2-oxobutanoate: step 2/4. The protein operates within amino-acid biosynthesis; L-valine biosynthesis; L-valine from pyruvate: step 2/4. Involved in the biosynthesis of branched-chain amino acids (BCAA). Catalyzes an alkyl-migration followed by a ketol-acid reduction of (S)-2-acetolactate (S2AL) to yield (R)-2,3-dihydroxy-isovalerate. In the isomerase reaction, S2AL is rearranged via a Mg-dependent methyl migration to produce 3-hydroxy-3-methyl-2-ketobutyrate (HMKB). In the reductase reaction, this 2-ketoacid undergoes a metal-dependent reduction by NADPH to yield (R)-2,3-dihydroxy-isovalerate. The polypeptide is Ketol-acid reductoisomerase (NADP(+)) (Synechococcus sp. (strain CC9902)).